We begin with the raw amino-acid sequence, 174 residues long: Gamma-crystallin S (174 aa).

Beta/gamma crystallin 'Greek key' domains follow at residues 2 to 40 (GRII…RVES) and 41 to 83 (GAWV…KMIH). Residues 84-89 (FVSGSE) are connecting peptide. 2 consecutive Beta/gamma crystallin 'Greek key' domains span residues 90-130 (YKIQ…KVLD) and 131-173 (GIWI…KRLM).

Belongs to the beta/gamma-crystallin family.

Functionally, crystallins are the dominant structural components of the vertebrate eye lens. The chain is Gamma-crystallin S (crygs) from Cyprinus carpio (Common carp).